The sequence spans 310 residues: MNMHVDMGRALTVRDWPALEALAKTMPADAGAREMTDDDLRAAGVDRRVPEQKLGAAIDEFASLRLPDRIDGRFVDGRRANLTVFDDARVAVRGHARAQRNLLERLETELLGGTLDTAGDEGGIQPDPILQGLVDVIGQGKSDIDAYATIVEGLTKYFQSVADVMSKLQDYISAKDDKNMKIDGGKIKALIQQVIDHLPTMQLPKGADIARWRKELGDAVSISDSGVVTINPDKLIKMRDSLPPDGTVWDTARYQAWNTAFSGQKDNIQNDVQTLVEKYSHQNSNFDNLVKVLSGAISTLTDTAKSYLQI.

Coiled-coil stretches lie at residues 127–171 (DPIL…LQDY) and 250–299 (DTAR…AIST).

The protein belongs to the invasin protein D family.

The protein resides in the secreted. In terms of biological role, required for invasion of epithelial cells, as well as for survival within host cells, escape from endocytic vesicles and subsequent actin-tail formation. Probably regulates the secretion of effectors BipB and BipC and their final integration into the target cell membrane. This Burkholderia pseudomallei (strain 1106a) protein is Translocator protein BipD (bipD).